The chain runs to 491 residues: Glutamyl-tRNA(Gln) amidotransferase subunit A (491 aa).

Serine 158 functions as the Charge relay system in the catalytic mechanism. Serine 182 (acyl-ester intermediate) is an active-site residue.

The protein belongs to the amidase family. GatA subfamily. As to quaternary structure, heterotrimer of A, B and C subunits.

It carries out the reaction L-glutamyl-tRNA(Gln) + L-glutamine + ATP + H2O = L-glutaminyl-tRNA(Gln) + L-glutamate + ADP + phosphate + H(+). Its function is as follows. Allows the formation of correctly charged Gln-tRNA(Gln) through the transamidation of misacylated Glu-tRNA(Gln) in organisms which lack glutaminyl-tRNA synthetase. The reaction takes place in the presence of glutamine and ATP through an activated gamma-phospho-Glu-tRNA(Gln). The protein is Glutamyl-tRNA(Gln) amidotransferase subunit A of Bradyrhizobium diazoefficiens (strain JCM 10833 / BCRC 13528 / IAM 13628 / NBRC 14792 / USDA 110).